Here is a 393-residue protein sequence, read N- to C-terminus: 4-hydroxyphenylpyruvate dioxygenase (393 aa).

Threonine 2 carries the N-acetylthreonine modification. VOC domains lie at 18-149 (HFHS…LVEK) and 180-338 (IIDH…IFTK). Lysine 132 is modified (N6-succinyllysine). Position 183 (histidine 183) interacts with Fe cation. Phosphoserine is present on residues serine 211, serine 226, and serine 250. The Fe cation site is built by histidine 266 and glutamate 349.

It belongs to the 4HPPD family. As to quaternary structure, homodimer. The cofactor is Fe cation.

The protein localises to the cytoplasm. Its subcellular location is the endoplasmic reticulum membrane. The protein resides in the golgi apparatus membrane. It catalyses the reaction 3-(4-hydroxyphenyl)pyruvate + O2 = homogentisate + CO2. Its pathway is amino-acid degradation; L-phenylalanine degradation; acetoacetate and fumarate from L-phenylalanine: step 3/6. Functionally, catalyzes the conversion of 4-hydroxyphenylpyruvic acid to homogentisic acid, one of the steps in tyrosine catabolism. The sequence is that of 4-hydroxyphenylpyruvate dioxygenase (Hpd) from Rattus norvegicus (Rat).